A 100-amino-acid polypeptide reads, in one-letter code: uncharacterized protein (100 aa).

The chain crosses the membrane as a helical span at residues 13–32 (IWSSLNIICLMVTFLNVQLS).

The protein localises to the mitochondrion membrane. This is an uncharacterized protein from Schizosaccharomyces pombe (strain 972 / ATCC 24843) (Fission yeast).